Here is a 193-residue protein sequence, read N- to C-terminus: ATP-dependent Clp protease proteolytic subunit (193 aa).

The active-site Nucleophile is the Ser-98. His-123 is a catalytic residue.

It belongs to the peptidase S14 family. Fourteen ClpP subunits assemble into 2 heptameric rings which stack back to back to give a disk-like structure with a central cavity, resembling the structure of eukaryotic proteasomes.

Its subcellular location is the cytoplasm. It catalyses the reaction Hydrolysis of proteins to small peptides in the presence of ATP and magnesium. alpha-casein is the usual test substrate. In the absence of ATP, only oligopeptides shorter than five residues are hydrolyzed (such as succinyl-Leu-Tyr-|-NHMec, and Leu-Tyr-Leu-|-Tyr-Trp, in which cleavage of the -Tyr-|-Leu- and -Tyr-|-Trp bonds also occurs).. Functionally, cleaves peptides in various proteins in a process that requires ATP hydrolysis. Has a chymotrypsin-like activity. Plays a major role in the degradation of misfolded proteins. The sequence is that of ATP-dependent Clp protease proteolytic subunit from Haemophilus influenzae (strain 86-028NP).